The following is a 610-amino-acid chain: Ecto-NOX disulfide-thiol exchanger 2 (610 aa).

Residues 128 to 207 (KTVFVGGLPE…GRLHVDFAQA (80 aa)) form the RRM domain. Coiled-coil stretches lie at residues 293 to 328 (IQSA…LSGI) and 381 to 505 (RREE…KESC).

Belongs to the ENOX family. Cu cation serves as cofactor. Post-translationally, glycosylated. As to expression, found in the sera of cancer patients with a wide variety of cancers including breast, prostate, lung and ovarian cancers, leukemias, and lymphomas. Not found in the serum of healthy volunteers or patients with disorders other than cancer. Probably shed into serum by cancer cells. Found on the cell borders of renal, kidney and ovarian carcinomas but not on the borders of surrounding non-cancerous stromal cells.

It is found in the cell membrane. The protein resides in the secreted. Its subcellular location is the extracellular space. With respect to regulation, inhibited by the antitumor sulfonylurea LY181984, the vabilloid capsaicin, and retinoids. In terms of biological role, may be involved in cell growth. Probably acts as a terminal oxidase of plasma electron transport from cytosolic NAD(P)H via hydroquinones to acceptors at the cell surface. Hydroquinone oxidase activity alternates with a protein disulfide-thiol interchange/oxidoreductase activity which may control physical membrane displacements associated with vesicle budding or cell enlargement. The activities oscillate with a period length of 22 minutes and play a role in control of the ultradian cellular biological clock. This is Ecto-NOX disulfide-thiol exchanger 2 (ENOX2) from Homo sapiens (Human).